A 713-amino-acid polypeptide reads, in one-letter code: Phospholipase A1 PLIP2, chloroplastic (713 aa).

A chloroplast-targeting transit peptide spans 1–32 (MDSLCLNSGLHGVIPAITAVGNGGCGGVVEVR). Disordered stretches follow at residues 118 to 140 (WKHE…DEEV) and 232 to 261 (ALKA…EKNK). Over residues 122-140 (EEEDDDEVEDEDGDEDEEV) the composition is skewed to acidic residues. The short motif at 426–430 (GHSLG) is the GXSXG element. Ser-428 acts as the Acyl-ester intermediate in catalysis. Active-site charge relay system residues include Asp-489 and His-608.

Belongs to the AB hydrolase superfamily. Lipase family.

The protein localises to the plastid. It localises to the chloroplast membrane. The protein resides in the chloroplast stroma. The catalysed reaction is a 1,2-diacyl-3-O-(beta-D-galactosyl)-sn-glycerol + 2 H2O = 3-beta-D-galactosyl-sn-glycerol + 2 a fatty acid + 2 H(+). It carries out the reaction a 1,2-diacyl-sn-glycero-3-phosphocholine + H2O = a 2-acyl-sn-glycero-3-phosphocholine + a fatty acid + H(+). It catalyses the reaction 1-hexadecanoyl-2-(9Z-octadecenoyl)-sn-glycero-3-phosphocholine + H2O = 2-(9Z-octadecenoyl)-sn-glycero-3-phosphocholine + hexadecanoate + H(+). The enzyme catalyses 1,2-di-(9Z-octadecenoyl)-sn-glycero-3-phosphocholine + H2O = 2-(9Z-octadecenoyl)-sn-glycero-3-phosphocholine + (9Z)-octadecenoate + H(+). The catalysed reaction is 1-octadecanoyl-2-(9Z-octadecenoyl)-sn-glycero-3-phosphocholine + H2O = 2-(9Z-octadecenoyl)-sn-glycero-3-phosphocholine + octadecanoate + H(+). It carries out the reaction 1-octadecanoyl-2-(9Z,12Z)-octadecadienoyl-sn-glycero-3-phosphocholine + H2O = 2-(9Z,12Z-octadecadienoyl)-sn-glycero-3-phosphocholine + octadecanoate + H(+). It catalyses the reaction 1,2-di-(9Z,12Z-octadecadienoyl)-sn-glycero-3-phosphocholine + H2O = 2-(9Z,12Z-octadecadienoyl)-sn-glycero-3-phosphocholine + (9Z,12Z)-octadecadienoate + H(+). The enzyme catalyses 1-(9Z-octadecenoyl)-2-hexadecanoyl-sn-glycero-3-phosphocholine + H2O = 2-hexadecanoyl-sn-glycero-3-phosphocholine + (9Z)-octadecenoate + H(+). Its function is as follows. Sn-1-specific phospholipase A1 that catalyzes the initial step of oxylipins and jasmonate (JA) biosynthesis. Hydrolyzes polyunsaturated acyl groups preferentially from chloroplastic monogalactosyldiacylglycerol (MGDG). May function downstream of abscisic acid (ABA) and provide a link between ABA-mediated abiotic stress responses and oxylipin and JA signalings. In vitro, possesses broad substrate specificity. Can hydrolyze the galactolipids monogalactosyldiacylglycerol (MGDG) and digalactosyldiacylglycerol (DGDG), the sulfolipid sulfoquinovosyldiacylglycerol (SQDG), and the phoshpolipids phosphatidylcholine (PC), and phosphatidylglycerol (PG). This chain is Phospholipase A1 PLIP2, chloroplastic, found in Arabidopsis thaliana (Mouse-ear cress).